The chain runs to 255 residues: uncharacterized protein (255 aa).

The N-terminal stretch at 1–23 is a signal peptide; the sequence is MKRLNKLVLGIIFLFLVISITAG. Cys24 is lipidated: N-palmitoyl cysteine. Residue Cys24 is the site of S-diacylglycerol cysteine attachment.

The protein belongs to the staphylococcal tandem lipoprotein family.

It is found in the cell membrane. This is an uncharacterized protein from Staphylococcus aureus (strain USA300).